The chain runs to 673 residues: G-protein-signaling modulator 1 (673 aa).

The interval Met1 to Arg507 is mediates association with membranes. TPR repeat units follow at residues Cys28–Asp61, Ser66–Ile99, Ala106–Gln139, Ala146–Val178, Glu180–Leu199, Gly206–Phe239, Arg246–Leu279, Ala286–Leu319, and Gly326–Ile359. An interaction with STK11/LKB1 region spans residues Asp361 to Ile485. At Ser410 the chain carries Phosphoserine. An Omega-N-methylarginine modification is found at Arg418. Over residues Pro420–Gly439 the composition is skewed to basic and acidic residues. Positions Pro420–Asp475 are disordered. Ser442, Ser467, Ser469, Ser490, and Ser491 each carry phosphoserine. Basic and acidic residues predominate over residues Lys451–Ser467. Residues Glu493 to Leu515 enclose the GoLoco 1 domain. The disordered stretch occupies residues Met508–Val531. A compositionally biased stretch (low complexity) spans Glu516 to Ala528. Phosphoserine is present on residues Ser543 and Ser567. 3 GoLoco domains span residues Thr546 to Val568, Gly594 to Pro616, and Asp628 to Leu650. Positions Asp644–Ser673 are disordered. Ser653 carries the phosphoserine modification. Residues Pro664–Ser673 are compositionally biased toward polar residues.

This sequence belongs to the GPSM family. Interacts with GNAI1 and GNAI2 preferentially in their GDP-bound state. May also interact with GNAO1. Interacts with INSC/inscuteable and FRMPD1. Interacts with GNAI3. Interacts with STK11/LKB1 and MACF1. In terms of processing, phosphorylation regulates interaction with G(i/o) alpha. In terms of tissue distribution, expressed in neural progenitor cells (at protein level).

The protein localises to the cytoplasm. It is found in the cytosol. It localises to the endoplasmic reticulum membrane. Its subcellular location is the golgi apparatus membrane. The protein resides in the cell membrane. Guanine nucleotide dissociation inhibitor (GDI) which functions as a receptor-independent activator of heterotrimeric G-protein signaling. Keeps G(i/o) alpha subunit in its GDP-bound form thus uncoupling heterotrimeric G-proteins signaling from G protein-coupled receptors. Controls spindle orientation and asymmetric cell fate of cerebral cortical progenitors. May also be involved in macroautophagy in intestinal cells. May play a role in drug addiction. The sequence is that of G-protein-signaling modulator 1 (Gpsm1) from Mus musculus (Mouse).